Here is a 547-residue protein sequence, read N- to C-terminus: Intercellular adhesion molecule 3 (547 aa).

The signal sequence occupies residues 1–29 (MATMVPSVLWPRACWTLLVCCLLTPGVQG). Topologically, residues 30–485 (QEFLLRVEPQ…VMDIEAGSSH (456 aa)) are extracellular. The 58-residue stretch at 46 to 103 (GGSLFVNCSTDCPSSEKIALETSLSKELVASGMGWAAFNLSNVTGNSRILCSVYCNGS) folds into the Ig-like C2-type 1 domain. 6 N-linked (GlcNAc...) asparagine glycosylation sites follow: asparagine 52, asparagine 84, asparagine 87, asparagine 101, asparagine 110, and asparagine 134. Cystine bridges form between cysteine 53-cysteine 96 and cysteine 57-cysteine 100. The Ig-like C2-type 2 domain occupies 132 to 197 (GQNFTLRCQV…FSCRTELDMQ (66 aa)). Cysteine 139 and cysteine 190 form a disulfide bridge. N-linked (GlcNAc...) asparagine glycans are attached at residues asparagine 206, asparagine 264, asparagine 295, asparagine 308, asparagine 320, asparagine 363, asparagine 389, asparagine 453, and asparagine 457. The region spanning 234–301 (ETSWPVDCTL…IVCNVTLGGE (68 aa)) is the Ig-like C2-type 3 domain. The cysteines at positions 241 and 294 are disulfide-linked. The region spanning 329–382 (GSTVTVSCMAGARVQVTLDGVPAAAPGQPAQLQLNATESDDRRSFFCSATLEVD) is the Ig-like C2-type 4 domain. Cysteine 336 and cysteine 375 are disulfide-bonded. One can recognise an Ig-like C2-type 5 domain in the interval 416–469 (KTTHVLQCQARGNPYPELRCLKEGSSREVPVGIPFFVNVTHNGTYQCQASSSRG). An intrachain disulfide couples cysteine 423 to cysteine 462. The helical transmembrane segment at 486 to 510 (FVPVFVAVLLTLGVVTIVLALMYVF) threads the bilayer. The Cytoplasmic portion of the chain corresponds to 511–547 (REHKRSGSYHVREESTYLPLTSMQPTQAMGEEPSRAE).

Belongs to the immunoglobulin superfamily. ICAM family. As to quaternary structure, interacts with moesin/MSN. Post-translationally, upon stimulation by a physiologic stimuli becomes rapidly and transiently phosphorylated on serine residues. In terms of tissue distribution, leukocytes.

It is found in the membrane. In terms of biological role, ICAM proteins are ligands for the leukocyte adhesion protein LFA-1 (integrin alpha-L/beta-2). ICAM3 is also a ligand for integrin alpha-D/beta-2. In association with integrin alpha-L/beta-2, contributes to apoptotic neutrophil phagocytosis by macrophages. This is Intercellular adhesion molecule 3 (ICAM3) from Pan troglodytes (Chimpanzee).